The chain runs to 88 residues: Cell division topological specificity factor (88 aa).

Belongs to the MinE family.

In terms of biological role, prevents the cell division inhibition by proteins MinC and MinD at internal division sites while permitting inhibition at polar sites. This ensures cell division at the proper site by restricting the formation of a division septum at the midpoint of the long axis of the cell. This is Cell division topological specificity factor from Pseudoalteromonas translucida (strain TAC 125).